Here is a 579-residue protein sequence, read N- to C-terminus: Folliculin (579 aa).

Residues 31–82 form a disordered region; sequence QGAGSGDSPDQVEQAEEEEGGIQMSSRVRAHSPAEGASSESSSPGPKKSDMC. Serine 62 and serine 73 each carry phosphoserine. Low complexity predominate over residues 63–76; that stretch reads PAEGASSESSSPGP. Residues 86 to 242 enclose the uDENN FLCN/SMCR8-type domain; the sequence is RSLAVGHPGY…RNGNAARSLT (157 aa). The stretch at 287 to 310 forms a coiled coil; that stretch reads EKLADLEEESESWDNSEAEEEEKA. The segment covering 294–308 has biased composition (acidic residues); it reads EESESWDNSEAEEEE. The segment at 294-323 is disordered; it reads EESESWDNSEAEEEEKAPVTPEGAEGRELT. Serine 302, serine 406, serine 537, serine 542, and serine 571 each carry phosphoserine. The cDENN FLCN/SMCR8-type domain maps to 339 to 491; that stretch reads QPPKLTGFKS…ILNKIEAALT (153 aa). The 66-residue stretch at 493–558 folds into the dDENN FLCN/SMCR8-type domain; it reads QNLSVDVVDQ…LLKFWMTGLS (66 aa).

Belongs to the folliculin family. In terms of assembly, interacts (via C-terminus) with FNIP1 or FNIP2 (via C-terminus). Component of the lysosomal folliculin complex (LFC), composed of FLCN, FNIP1 (or FNIP2), RagA/RRAGA or RagB/RRAGB GDP-bound, RagC/RRAGC or RagD/RRAGD GTP-bound, and Ragulator. Interaction with FNIP1 or FNIP2 mediates indirect interaction with the PRKAA1, PRKAB1 and PRKAG1 subunits of 5'-AMP-activated protein kinase (AMPK). Interacts with HSP90AA1 in the presence of FNIP1. Interacts with HSP70, STUB1, CDC37, AHSA1, CCT2, STIP1, PTGES3 and PPP5C. Interacts with GABARAP; interaction takes place in the presence of FNIP1 and/or FNIP2. Interacts with RILP; the interaction is direct and promotes association between RILP and RAB34. Interacts with KIF3A and KIF3B. Interacts with lactate dehydrogenase LDHA, but not LDHB; the interaction is direct, may preferentially bind LDHA dimers rather than tetramers, and regulates LDHA activity, acting as an uncompetitive inhibitor. Post-translationally, phosphorylation by ULK1 modulates the interaction with GABARAP and is required to regulate autophagy. In terms of tissue distribution, highly expressed in adult heart, pancreas, and prostate with moderate expression in adult brain, kidney, liver, adipose tissue and lung.

It is found in the lysosome membrane. The protein localises to the cytoplasm. Its subcellular location is the cytosol. It localises to the cell projection. The protein resides in the cilium. It is found in the cytoskeleton. The protein localises to the microtubule organizing center. Its subcellular location is the centrosome. It localises to the spindle. The protein resides in the nucleus. With respect to regulation, GTPase-activating activity is inhibited in the folliculin complex (LFC), which stabilizes the GDP-bound state of RagA/RRAGA (or RagB/RRAGB), because Arg-164 is located far from the RagC/RRAGC or RagD/RRAGD nucleotide pocket. Disassembly of the LFC complex upon amino acid restimulation liberates the GTPase-activating activity. Its function is as follows. Multi-functional protein, involved in both the cellular response to amino acid availability and in the regulation of glycolysis. GTPase-activating protein that plays a key role in the cellular response to amino acid availability through regulation of the non-canonical mTORC1 signaling cascade controlling the MiT/TFE factors TFEB and TFE3. Activates mTORC1 by acting as a GTPase-activating protein: specifically stimulates GTP hydrolysis by RagC/RRAGC or RagD/RRAGD, promoting the conversion to the GDP-bound state of RagC/RRAGC or RagD/RRAGD, and thereby activating the kinase activity of mTORC1. The GTPase-activating activity is inhibited during starvation and activated in presence of nutrients. Acts as a key component for non-canonical mTORC1-dependent control of the MiT/TFE factors TFEB and TFE3, while it is not involved in mTORC1-dependent phosphorylation of canonical RPS6KB1/S6K1 and EIF4EBP1/4E-BP1. In low-amino acid conditions, the lysosomal folliculin complex (LFC) is formed on the membrane of lysosomes, which inhibits the GTPase-activating activity of FLCN, inactivates mTORC1 and maximizes nuclear translocation of TFEB and TFE3. Upon amino acid restimulation, RagA/RRAGA (or RagB/RRAGB) nucleotide exchange promotes disassembly of the LFC complex and liberates the GTPase-activating activity of FLCN, leading to activation of mTORC1 and subsequent cytoplasmic retention of TFEB and TFE3. Indirectly acts as a positive regulator of Wnt signaling by promoting mTOR-dependent cytoplasmic retention of MiT/TFE factor TFE3. Required for the exit of hematopoietic stem cell from pluripotency by promoting mTOR-dependent cytoplasmic retention of TFE3, thereby increasing Wnt signaling. Involved in the control of embryonic stem cells differentiation; together with LAMTOR1 it is necessary to recruit and activate RagC/RRAGC and RagD/RRAGD at the lysosomes, and to induce exit of embryonic stem cells from pluripotency via non-canonical, mTOR-independent TFE3 inactivation. Acts as an inhibitor of browning of adipose tissue by regulating mTOR-dependent cytoplasmic retention of TFE3. In response to flow stress, regulates STK11/LKB1 accumulation and mTORC1 activation through primary cilia: may act by recruiting STK11/LKB1 to primary cilia for activation of AMPK resided at basal bodies, causing mTORC1 down-regulation. Together with FNIP1 and/or FNIP2, regulates autophagy: following phosphorylation by ULK1, interacts with GABARAP and promotes autophagy. Required for starvation-induced perinuclear clustering of lysosomes by promoting association of RILP with its effector RAB34. Regulates glycolysis by binding to lactate dehydrogenase LDHA, acting as an uncompetitive inhibitor. This Mus musculus (Mouse) protein is Folliculin.